The chain runs to 315 residues: PDZ domain-containing protein GIPC2 (315 aa).

Residues 1-12 are compositionally biased toward basic residues; it reads MPLKLRGKKKAK. The disordered stretch occupies residues 1–34; that stretch reads MPLKLRGKKKAKSKETAGLVEGEPTGAGGGSLSA. Residues 117–197 enclose the PDZ domain; it reads EVNVYKSEDS…EELFTMKLIE (81 aa).

The protein belongs to the GIPC family. As to quaternary structure, probably interacts with SEMA5A. As to expression, expressed at highest levels in ascending colon and at moderate levels in adult kidney. Expressed at low levels in adult pancreas and at very low levels in adult liver. Expression is down-regulated in several primary tumors, such as kidney, colon and rectal tumors.

The protein resides in the cytoplasm. This chain is PDZ domain-containing protein GIPC2 (GIPC2), found in Homo sapiens (Human).